We begin with the raw amino-acid sequence, 922 residues long: Translation initiation factor IF-2 (922 aa).

The segment at 33–310 (KTASSTVQPP…SKRQKRNEYE (278 aa)) is disordered. Over residues 75-87 (PAAKAAPKAAAKP) the composition is skewed to low complexity. Composition is skewed to pro residues over residues 88–98 (GPKPGPKPGPQ) and 140–150 (TPKPGAKPGPK). Low complexity-rich tracts occupy residues 151–169 (PGGA…GRAP) and 202–211 (PGSRPGGAKK). 2 stretches are compositionally biased toward gly residues: residues 215–225 (KPGGAKQGGGR) and 248–292 (FGGG…GRPG). Positions 296-305 (RKGRKSKRQK) are enriched in basic residues. Residues 418 to 590 (QRPPVVTVMG…VLLTADASLD (173 aa)) form the tr-type G domain. Residues 427 to 434 (GHVDHGKT) are G1. 427–434 (GHVDHGKT) serves as a coordination point for GTP. The tract at residues 452-456 (GITQH) is G2. The interval 477-480 (DTPG) is G3. GTP is bound by residues 477–481 (DTPGH) and 531–534 (NKID). Residues 531–534 (NKID) are G4. Residues 567–569 (SAK) are G5.

This sequence belongs to the TRAFAC class translation factor GTPase superfamily. Classic translation factor GTPase family. IF-2 subfamily.

The protein resides in the cytoplasm. Functionally, one of the essential components for the initiation of protein synthesis. Protects formylmethionyl-tRNA from spontaneous hydrolysis and promotes its binding to the 30S ribosomal subunits. Also involved in the hydrolysis of GTP during the formation of the 70S ribosomal complex. The chain is Translation initiation factor IF-2 from Corynebacterium jeikeium (strain K411).